We begin with the raw amino-acid sequence, 307 residues long: UDP-3-O-acyl-N-acetylglucosamine deacetylase (307 aa).

The Zn(2+) site is built by histidine 80, histidine 239, and aspartate 243. Histidine 266 serves as the catalytic Proton donor.

The protein belongs to the LpxC family. Zn(2+) serves as cofactor.

It catalyses the reaction a UDP-3-O-[(3R)-3-hydroxyacyl]-N-acetyl-alpha-D-glucosamine + H2O = a UDP-3-O-[(3R)-3-hydroxyacyl]-alpha-D-glucosamine + acetate. It participates in glycolipid biosynthesis; lipid IV(A) biosynthesis; lipid IV(A) from (3R)-3-hydroxytetradecanoyl-[acyl-carrier-protein] and UDP-N-acetyl-alpha-D-glucosamine: step 2/6. Its function is as follows. Catalyzes the hydrolysis of UDP-3-O-myristoyl-N-acetylglucosamine to form UDP-3-O-myristoylglucosamine and acetate, the committed step in lipid A biosynthesis. This chain is UDP-3-O-acyl-N-acetylglucosamine deacetylase, found in Neisseria gonorrhoeae (strain ATCC 700825 / FA 1090).